A 277-amino-acid chain; its full sequence is Phosphoenolpyruvate synthase regulatory protein (277 aa).

Residue 157–164 participates in ADP binding; sequence GVSRCGKT.

This sequence belongs to the pyruvate, phosphate/water dikinase regulatory protein family. PSRP subfamily.

The enzyme catalyses [pyruvate, water dikinase] + ADP = [pyruvate, water dikinase]-phosphate + AMP + H(+). The catalysed reaction is [pyruvate, water dikinase]-phosphate + phosphate + H(+) = [pyruvate, water dikinase] + diphosphate. Bifunctional serine/threonine kinase and phosphorylase involved in the regulation of the phosphoenolpyruvate synthase (PEPS) by catalyzing its phosphorylation/dephosphorylation. This Escherichia coli O17:K52:H18 (strain UMN026 / ExPEC) protein is Phosphoenolpyruvate synthase regulatory protein.